The following is a 473-amino-acid chain: ATP synthase subunit beta (473 aa).

Residue 158-165 (GGAGVGKT) coordinates ATP.

It belongs to the ATPase alpha/beta chains family. F-type ATPases have 2 components, CF(1) - the catalytic core - and CF(0) - the membrane proton channel. CF(1) has five subunits: alpha(3), beta(3), gamma(1), delta(1), epsilon(1). CF(0) has three main subunits: a(1), b(2) and c(9-12). The alpha and beta chains form an alternating ring which encloses part of the gamma chain. CF(1) is attached to CF(0) by a central stalk formed by the gamma and epsilon chains, while a peripheral stalk is formed by the delta and b chains.

Its subcellular location is the cell membrane. It catalyses the reaction ATP + H2O + 4 H(+)(in) = ADP + phosphate + 5 H(+)(out). Its function is as follows. Produces ATP from ADP in the presence of a proton gradient across the membrane. The catalytic sites are hosted primarily by the beta subunits. The polypeptide is ATP synthase subunit beta (Geobacillus sp. (strain WCH70)).